The primary structure comprises 238 residues: Large ribosomal subunit protein uL1 (238 aa).

Belongs to the universal ribosomal protein uL1 family. In terms of assembly, part of the 50S ribosomal subunit.

Its function is as follows. Binds directly to 23S rRNA. The L1 stalk is quite mobile in the ribosome, and is involved in E site tRNA release. Protein L1 is also a translational repressor protein, it controls the translation of the L11 operon by binding to its mRNA. This chain is Large ribosomal subunit protein uL1, found in Beutenbergia cavernae (strain ATCC BAA-8 / DSM 12333 / CCUG 43141 / JCM 11478 / NBRC 16432 / NCIMB 13614 / HKI 0122).